A 561-amino-acid chain; its full sequence is Arginine--tRNA ligase (561 aa).

The short motif at 135–145 is the 'HIGH' region element; the sequence is ANPTGLLHMGN.

The protein belongs to the class-I aminoacyl-tRNA synthetase family. Monomer.

The protein localises to the cytoplasm. The catalysed reaction is tRNA(Arg) + L-arginine + ATP = L-arginyl-tRNA(Arg) + AMP + diphosphate. The sequence is that of Arginine--tRNA ligase from Desulfitobacterium hafniense (strain DSM 10664 / DCB-2).